Reading from the N-terminus, the 419-residue chain is Acetyltransferase fsoF (419 aa).

N2 carries an N-linked (GlcNAc...) asparagine glycan. 2 helical membrane-spanning segments follow: residues 4–24 (TIISLALIFFQLTTTALVVGF) and 62–82 (AFLGAASVFLVILYVDAAILS). The tract at residues 89–114 (QSPTSSLGGLIPPTTRDTPKTQNNAT) is disordered. N-linked (GlcNAc...) asparagine glycosylation is found at N112 and N169. 4 consecutive transmembrane segments (helical) span residues 230 to 250 (YWAIQYAVIDLLYSLLAVVAV), 314 to 334 (YVFMTLVFAVSGVFHTLSDVS), 337 to 357 (IPLGESGAMRFFVLQAIGIML), and 386 to 406 (VSGPVWLVTWLTWTSPGWIYM).

This sequence belongs to the wax synthase family.

The protein localises to the membrane. The catalysed reaction is 3-O-(beta-D-glucopyranosyl)-2alpha-hydroxyisomotiol + acetyl-CoA = 3-O-(beta-D-glucopyranosyl)-2alpha-acetoxyisomotiol + CoA. The enzyme catalyses 2-deacetylfuscoatroside + acetyl-CoA = fuscoatroside + CoA. Its pathway is secondary metabolite biosynthesis; terpenoid biosynthesis. Its function is as follows. Terpene cyclase-glycosyl transferase fusion protein; part of the gene cluster that mediates the biosynthesis of the enfumafungin-type antibiotic, fuscoatroside. Within the pathway, fsoF catalyzes the acetylation of C2-alpha-OH following the C2 hydroxylation by the cytochrome monooxygenase fsoD. The fuscoatroside biosynthesis is initiated by the cyclization of 2,3(S)-oxidosqualene through FsoA's terpene cyclase (TC) domain, leading to the formation of the fernane skeleton isomotiol, harboring a fernane triterpene skeleton with a C8-C9 double bond. Subsequently, C2-alpha-hydroxylation mediated by fsoD results in the production of 2-alpha-hydroxy-isomotiol, which is further acetylated by fsoF. The glycosyltransferase (GT) domain of FsoA may convert isomotiol, 2-alpha-hydroxy-isomotiol, and the acetylated derivative of 2-alpha-hydroxy-isomotiol into their corresponding glycosides 3-O-(beta-D-glucopyranosyl)-isomotiol, 3-O-(beta-D-glucopyranosyl)-2-alpha-hydroxy-isomotiol, and 3-O-(beta-D-glucopyranosyl)-2-alpha-acetoxy-isomotiol, which then undergo oxidative cleavage under the action of fsoE to form s 2-deacetoxy-fuscoatroside, 2-deacetyl-fuscoatroside, and fuscoatroside, respectively. Although hydroxylation followed by acetylation of 3-O-(beta-D-glucopyranosyl)-isomotiol and 2-deacetoxy-fuscoatroside by fsoD and fsoF could not be ruled out, this process is likely to occur with difficulty due to bulky steric hindrance caused by the presence of a glycan at C3 in these compounds. Interestingly, fsoE can also utilize the aglycones isomotiol and 2-alpha-hydroxy-isomotiol as substrates to generate 19-beta-hydroxy-isomotiol and 2-alpha,19-beta-dihydroxy-isomotiol, respectively. These reactions occur with lower efficiency. Finally, fsoE can further convert 2-alpha,19-beta-dihydroxy-isomotiol into 2-alpha-hydroxy-ismotiol-19-one and 2-alpha-hydroxy-ismotiol-19-one into 2-deacetyl-3-deglucopyranosyl-fuscoatroside. The protein is Acetyltransferase fsoF of Humicola fuscoatra.